A 485-amino-acid chain; its full sequence is Glutamate--tRNA ligase (485 aa).

The 'HIGH' region motif lies at 11-21; the sequence is PSPTGYMHVGN. Residues Cys108, Cys110, Cys135, and Asp137 each coordinate Zn(2+). Positions 252–256 match the 'KMSKS' region motif; the sequence is KLSKR. Residue Lys255 coordinates ATP.

The protein belongs to the class-I aminoacyl-tRNA synthetase family. Glutamate--tRNA ligase type 1 subfamily. In terms of assembly, monomer. It depends on Zn(2+) as a cofactor.

It localises to the cytoplasm. It carries out the reaction tRNA(Glu) + L-glutamate + ATP = L-glutamyl-tRNA(Glu) + AMP + diphosphate. In terms of biological role, catalyzes the attachment of glutamate to tRNA(Glu) in a two-step reaction: glutamate is first activated by ATP to form Glu-AMP and then transferred to the acceptor end of tRNA(Glu). This is Glutamate--tRNA ligase from Clostridium botulinum (strain ATCC 19397 / Type A).